We begin with the raw amino-acid sequence, 91 residues long: C-C motif chemokine 5 (91 aa).

The first 23 residues, 1 to 23, serve as a signal peptide directing secretion; sequence MKISAAALTIILTAAALCTPAPA. 2 disulfides stabilise this stretch: Cys-33-Cys-57 and Cys-34-Cys-73.

It belongs to the intercrine beta (chemokine CC) family. As to expression, T-cell and macrophage specific.

It localises to the secreted. Functionally, chemoattractant for blood monocytes, memory T-helper cells and eosinophils. Causes the release of histamine from basophils and activates eosinophils. May activate several chemokine receptors including CCR1, CCR3, CCR4 and CCR5. May also be an agonist of the G protein-coupled receptor GPR75. Together with GPR75, may play a role in neuron survival through activation of a downstream signaling pathway involving the PI3, Akt and MAP kinases. By activating GPR75 may also play a role in insulin secretion by islet cells. This Mus musculus (Mouse) protein is C-C motif chemokine 5 (Ccl5).